The primary structure comprises 122 residues: Large ribosomal subunit protein uL14 (122 aa).

The protein belongs to the universal ribosomal protein uL14 family. In terms of assembly, part of the 50S ribosomal subunit. Forms a cluster with proteins L3 and L19. In the 70S ribosome, L14 and L19 interact and together make contacts with the 16S rRNA in bridges B5 and B8.

In terms of biological role, binds to 23S rRNA. Forms part of two intersubunit bridges in the 70S ribosome. This chain is Large ribosomal subunit protein uL14, found in Acaryochloris marina (strain MBIC 11017).